Consider the following 417-residue polypeptide: UPF0754 membrane protein PCC8801_0398 (417 aa).

2 helical membrane-spanning segments follow: residues Phe11 to Thr31 and Ile395 to Ile415.

Belongs to the UPF0754 family.

It localises to the cell inner membrane. The chain is UPF0754 membrane protein PCC8801_0398 from Rippkaea orientalis (strain PCC 8801 / RF-1) (Cyanothece sp. (strain PCC 8801)).